The following is a 181-amino-acid chain: Regulator of G-protein signaling 5 (181 aa).

The RGS domain occupies 64–180 (SLDKLLQNNY…VRSEFYQEFI (117 aa)).

The protein localises to the cytoplasm. It is found in the membrane. Inhibits signal transduction by increasing the GTPase activity of G protein alpha subunits thereby driving them into their inactive GDP-bound form. Binds to G(i)-alpha and G(o)-alpha, but not to G(s)-alpha. This chain is Regulator of G-protein signaling 5 (RGS5), found in Bos taurus (Bovine).